A 150-amino-acid polypeptide reads, in one-letter code: Cilia- and flagella-associated protein 68 (150 aa).

Mn stretches follow at residues 99–110 (TTYDTSYNNKMP) and 140–150 (KSTYMNSYSKP).

The protein belongs to the CFAP68 family. Microtubule inner protein component of sperm flagellar doublet microtubules.

Its subcellular location is the cytoplasm. The protein resides in the cytoskeleton. It localises to the cilium axoneme. It is found in the flagellum axoneme. The protein localises to the nucleus. Its subcellular location is the cell projection. The protein resides in the cilium. Its function is as follows. Microtubule inner protein (MIP) part of the dynein-decorated doublet microtubules (DMTs) in cilia axoneme, which is required for motile cilia beating. This is Cilia- and flagella-associated protein 68 from Homo sapiens (Human).